The following is a 177-amino-acid chain: Transmembrane protein 190 (177 aa).

A signal peptide spans 1–21; the sequence is MLGCGIPALGLLLLLQGSADG. Residues 22-81 are Extracellular-facing; that stretch reads NGIQGFFYPWSCEGDIWDRESCGGQAAIDSPNLCLRLRCCYRNGVCYHQRPDENVRRKHM. Residues 31–71 form the P-type domain; that stretch reads WSCEGDIWDRESCGGQAAIDSPNLCLRLRCCYRNGVCYHQR. Cystine bridges form between C33–C61, C43–C60, and C55–C67. A helical transmembrane segment spans residues 82–102; that stretch reads WALVWTCSGLLLLSCSICLFW. The Cytoplasmic segment spans residues 103 to 177; that stretch reads WAKRRDVLHM…EETEGEEEED (75 aa). The interval 131–177 is disordered; the sequence is KHRGTKKTPSTGSVPVALSKESRDVEGGTEGEGTEEGEETEGEEEED. Acidic residues predominate over residues 157 to 177; sequence GGTEGEGTEEGEETEGEEEED.

Its subcellular location is the membrane. The polypeptide is Transmembrane protein 190 (TMEM190) (Homo sapiens (Human)).